The chain runs to 171 residues: Large ribosomal subunit protein uL10 (171 aa).

It belongs to the universal ribosomal protein uL10 family. As to quaternary structure, part of the ribosomal stalk of the 50S ribosomal subunit. The N-terminus interacts with L11 and the large rRNA to form the base of the stalk. The C-terminus forms an elongated spine to which L12 dimers bind in a sequential fashion forming a multimeric L10(L12)X complex.

In terms of biological role, forms part of the ribosomal stalk, playing a central role in the interaction of the ribosome with GTP-bound translation factors. This chain is Large ribosomal subunit protein uL10, found in Corynebacterium jeikeium (strain K411).